The following is a 113-amino-acid chain: Hydrogenase maturation factor HypA (113 aa).

His2 is a Ni(2+) binding site. Residues Cys73, Cys76, Cys89, and Cys92 each contribute to the Zn(2+) site.

This sequence belongs to the HypA/HybF family.

Its function is as follows. Involved in the maturation of [NiFe] hydrogenases. Required for nickel insertion into the metal center of the hydrogenase. The chain is Hydrogenase maturation factor HypA from Legionella pneumophila subsp. pneumophila (strain Philadelphia 1 / ATCC 33152 / DSM 7513).